The primary structure comprises 81 residues: MAHSVKVYDTCIGCTQCVRACPCDVLEMVPWDGCKAKQIASAPRTEDCIGCKRCETACPTDFLSVRVYLGAETTRSMGLAY.

2 consecutive 4Fe-4S ferredoxin-type domains span residues Ala-2–Trp-31 and Ile-39–Tyr-68. Cys-11, Cys-14, Cys-17, Cys-21, Cys-48, Cys-51, Cys-54, and Cys-58 together coordinate [4Fe-4S] cluster.

As to quaternary structure, the eukaryotic PSI reaction center is composed of at least 11 subunits. The cofactor is [4Fe-4S] cluster.

The protein resides in the plastid. It localises to the chloroplast thylakoid membrane. The enzyme catalyses reduced [plastocyanin] + hnu + oxidized [2Fe-2S]-[ferredoxin] = oxidized [plastocyanin] + reduced [2Fe-2S]-[ferredoxin]. In terms of biological role, apoprotein for the two 4Fe-4S centers FA and FB of photosystem I (PSI); essential for photochemical activity. FB is the terminal electron acceptor of PSI, donating electrons to ferredoxin. The C-terminus interacts with PsaA/B/D and helps assemble the protein into the PSI complex. Required for binding of PsaD and PsaE to PSI. PSI is a plastocyanin/cytochrome c6-ferredoxin oxidoreductase, converting photonic excitation into a charge separation, which transfers an electron from the donor P700 chlorophyll pair to the spectroscopically characterized acceptors A0, A1, FX, FA and FB in turn. The protein is Photosystem I iron-sulfur center of Pyropia yezoensis (Susabi-nori).